A 417-amino-acid polypeptide reads, in one-letter code: Snake venom metalloproteinase kistomin (417 aa).

The first 20 residues, 1-20 (MIEVLLVTICLAAFPYQGSS), serve as a signal peptide directing secretion. The propeptide occupies 21–189 (IILESGNVND…KKPFRLNLTP (169 aa)). The Peptidase M12B domain occupies 197 to 391 (AKVYLVIVAD…RKPECLFKKP (195 aa)). Disulfide bonds link Cys308-Cys386, Cys348-Cys370, and Cys350-Cys353. His333 contacts Zn(2+). Glu334 is an active-site residue. Zn(2+) contacts are provided by His337 and His343. A propeptide spanning residues 392 to 417 (LRTDTVSTPVSGNEPLEVITMDDFYA) is cleaved from the precursor.

The protein belongs to the venom metalloproteinase (M12B) family. P-I subfamily. In terms of assembly, monomer. Zn(2+) serves as cofactor. In terms of tissue distribution, expressed by the venom gland.

Its subcellular location is the secreted. With respect to regulation, inhibited by EDTA, and O-phenanthrolene. In terms of biological role, snake venom zinc metalloprotease that inhibits platelet aggregation by binding specifically to platelet glycoprotein VI (GP6) and platelet glycoprotein Ib alpha (GP1BA). It inhibits the interaction between collagen and platelet GP6 by cleaving GP6 (at '225-Glu-|-Ala-226' and '238-Val-|-Phe-239' bonds), and inhibits vWF-induced platelet aggregation by cleaving GP1BA and vWF. Cleavage of GP1BA occurs at two distinct sites to generate two soluble fragments. It also cleaves alpha- (FGA) and subsequently the gamma-chain (FGG) of fibrinogen, leaving the beta-chain unaffected. It also inhibits collagen-, convulxin- and ristocetin-induced platelet aggregation. It blocks the adhesion of platelet to immobilized collagen, but only exerts a slight inhibition to fibrinogen. In vivo, it exerts potent antithrombotic effect. The sequence is that of Snake venom metalloproteinase kistomin from Calloselasma rhodostoma (Malayan pit viper).